Here is a 101-residue protein sequence, read N- to C-terminus: NAD(P)H-quinone oxidoreductase subunit 4L, chloroplastic (101 aa).

Helical transmembrane passes span 2–22, 32–52, and 61–81; these read MLEH…YGLI, MCLE…SDFF, and IFSI…LAIV.

This sequence belongs to the complex I subunit 4L family. In terms of assembly, NDH is composed of at least 16 different subunits, 5 of which are encoded in the nucleus.

Its subcellular location is the plastid. It localises to the chloroplast thylakoid membrane. It catalyses the reaction a plastoquinone + NADH + (n+1) H(+)(in) = a plastoquinol + NAD(+) + n H(+)(out). The catalysed reaction is a plastoquinone + NADPH + (n+1) H(+)(in) = a plastoquinol + NADP(+) + n H(+)(out). NDH shuttles electrons from NAD(P)H:plastoquinone, via FMN and iron-sulfur (Fe-S) centers, to quinones in the photosynthetic chain and possibly in a chloroplast respiratory chain. The immediate electron acceptor for the enzyme in this species is believed to be plastoquinone. Couples the redox reaction to proton translocation, and thus conserves the redox energy in a proton gradient. This Guizotia abyssinica (Niger) protein is NAD(P)H-quinone oxidoreductase subunit 4L, chloroplastic.